A 384-amino-acid polypeptide reads, in one-letter code: Ubiquitin-like modifier-activating enzyme 5 (384 aa).

Residues Gly-63, Asp-84, Lys-107, Asn-130, and Asn-164 each contribute to the ATP site. Zn(2+) is bound by residues Cys-206 and Cys-209. Cys-230 serves as the catalytic Glycyl thioester intermediate. Residues Cys-283 and Cys-288 each contribute to the Zn(2+) site. Residues Glu-352–Glu-375 are disordered.

This sequence belongs to the ubiquitin-activating E1 family. UBA5 subfamily.

E1-like enzyme which activates UFM1. This Drosophila persimilis (Fruit fly) protein is Ubiquitin-like modifier-activating enzyme 5.